We begin with the raw amino-acid sequence, 515 residues long: Maturase K (515 aa).

It belongs to the intron maturase 2 family. MatK subfamily.

The protein resides in the plastid. It is found in the chloroplast. Its function is as follows. Usually encoded in the trnK tRNA gene intron. Probably assists in splicing its own and other chloroplast group II introns. The polypeptide is Maturase K (Pinus contorta (Shore pine)).